Here is a 421-residue protein sequence, read N- to C-terminus: Probable G-protein coupled receptor 151 (421 aa).

Topologically, residues 1 to 44 (MGKATLAVFADSDSSNMNESFAHLHFAGGYLPSDSKGWRTIIPS) are extracellular. Asn18 carries an N-linked (GlcNAc...) asparagine glycan. The chain crosses the membrane as a helical span at residues 45–65 (LLAAVCLVGFVGNLCVIGLLL). At 66–74 (HGVWKRKPS) the chain is on the cytoplasmic side. The chain crosses the membrane as a helical span at residues 75–95 (MIHSLILNLSLADISLLLFSA). Residues 96–122 (PVRATAYVKGVWDLGWFVCKSSDWFTH) lie on the Extracellular side of the membrane. Cys114 and Cys190 form a disulfide bridge. A helical membrane pass occupies residues 123 to 143 (MCMAAKSLTFVVVAKVCFMYA). Topologically, residues 144–156 (SDPAKPVGTHNCT) are cytoplasmic. Residues 157–177 (IWSLLGAIWVVASLLPLPEWF) traverse the membrane as a helical segment. At 178 to 204 (FSTTRHHAGVEMCLVDVPAVAAEFMSL) the chain is on the extracellular side. Residues 205–225 (FGKLYPLLVFCLPLLLAGFYF) traverse the membrane as a helical segment. The Cytoplasmic segment spans residues 226 to 258 (WRAYNQCKIRCAKTQNLRNQMRSKQLTVMLLST). A helical membrane pass occupies residues 259-279 (AVTSALLWLPEWIAWLWVWHL). At 280 to 289 (KAGGPMPPQG) the chain is on the extracellular side. The chain crosses the membrane as a helical span at residues 290-310 (FIALSQVLMFSISTVNPLIFL). The Cytoplasmic portion of the chain corresponds to 311–421 (MMSEEFKAGL…HEGQETKGCN (111 aa)). Disordered stretches follow at residues 346-381 (IETLPGKAPSPETQTCIPDTDRCGSPDSSKETTDKV) and 394-421 (HERDVGPSAQDNDPIPWEHEGQETKGCN). Basic and acidic residues-rich tracts occupy residues 364-379 (DTDRCGSPDSSKETTD) and 409-421 (PWEHEGQETKGCN).

It belongs to the G-protein coupled receptor 1 family. In terms of tissue distribution, exclusively expressed in neurons of the habenular complex. The expression is particularly prominent in the medial habenular nucleus, whereas the lateral habenular nucleus exhibited a lower level of expression.

Its subcellular location is the cell membrane. Functionally, orphan receptor. In Rattus norvegicus (Rat), this protein is Probable G-protein coupled receptor 151 (Gpr151).